Reading from the N-terminus, the 694-residue chain is MADLSKYRNIGIFAHVDAGKTTTTERILKLTGQIHKSGDTHDGTSVTDFMDQESERGITIQSAAVSCFWKDHRFNVIDTPGHVDFTVEVYRSLKVLDGGIGVFCGSGGVEPQSETNWRYANESGVARVIFVNKLDRMGADFFRVTNQVQKVLGATPLIMTLPIGREDEFVGVVDVLTKQAYVWDATGLPENYTIEDVPADMVDQVEEYHELLIETAVEQDDELLETYMEGVIPSIEDVKRCIRKGTRDLAFFPTYCGSAYKNKGMQLILDAVVDYLPSPTEVDPQPLMDEEGNENGEFAIVSTDLPFKALAFKIMDDRFGALTFVRIYSGKLNKGDTILNAFTGKTERVGRMVEMQADDRNELASAQAGDIIAIVGMKNVQTGHTLCDPKHPVTLEPMVFPTPVISIAVQPKDKGGNEKMGVAIGKMVAEDPSFQVETDEDSGETILKGMGELHLDIKVDILKRTYGVDLIVGQPQVAYRETITKEIEDSYTHKKQSGGSGQFGKIDYRIKPGEVASGFTFKSSVVGGNVPKEFWPAVEKGFKSMMGTGVLAGFPVLDVEVELFDGGFHAVDSSAIAFEIAAKGAFRQSIPKAGAQLLEPIMKVDVFTPEDHVGDVIGDLNRRRGMMKDQEPGLTGVRIKVDVPLSEMFGYIGSLRTMTSGRGQFSMEFSHYAPCPNNVAEAVIAAEKEKKAAK.

A tr-type G domain is found at 5 to 280 (SKYRNIGIFA…AVVDYLPSPT (276 aa)). Residues 14–21 (AHVDAGKT), 78–82 (DTPGH), and 132–135 (NKLD) each bind GTP.

Belongs to the TRAFAC class translation factor GTPase superfamily. Classic translation factor GTPase family. EF-G/EF-2 subfamily.

It is found in the cytoplasm. In terms of biological role, catalyzes the GTP-dependent ribosomal translocation step during translation elongation. During this step, the ribosome changes from the pre-translocational (PRE) to the post-translocational (POST) state as the newly formed A-site-bound peptidyl-tRNA and P-site-bound deacylated tRNA move to the P and E sites, respectively. Catalyzes the coordinated movement of the two tRNA molecules, the mRNA and conformational changes in the ribosome. The chain is Elongation factor G 2 from Pseudoalteromonas translucida (strain TAC 125).